The chain runs to 424 residues: Serine incorporator 5 (424 aa).

Residues 1 to 6 (MYALYF) are Extracellular-facing. A helical transmembrane segment spans residues 7 to 23 (ILVVVLCCIMMSTTVAH). Over 24-52 (KMKEHIPFFEDMCKGIKAGDTCEKLVGYS) the chain is Cytoplasmic. A helical membrane pass occupies residues 53-73 (AVYRVCFGMACFFFIFCLLTL). Topologically, residues 74-87 (KINNSKSCRAHIHN) are extracellular. Asparagine 76 carries an N-linked (GlcNAc...) asparagine glycan. Residues 88-108 (GFWFFKLLLLGAMCSGAFFIP) traverse the membrane as a helical segment. At 109–119 (DQDTFLNAWRY) the chain is on the cytoplasmic side. The helical transmembrane segment at 120–140 (VGAVGGFLFIGIQLLLLVEFA) threads the bilayer. Residues 141–161 (HKWNKNWTAGTASNKLWYASL) are Extracellular-facing. N-linked (GlcNAc...) asparagine glycosylation is present at asparagine 146. The helical transmembrane segment at 162 to 182 (ALVTLIMYSIATGGLVLMAVF) threads the bilayer. The Cytoplasmic segment spans residues 183–193 (YTQKDGCMENK). A helical membrane pass occupies residues 194-214 (ILLGVNGGLCVLISLVAISPC). At 215–221 (VQNRQPH) the chain is on the extracellular side. Residues 222 to 242 (SGLLQSGVISCYVTYLTFSAL) form a helical membrane-spanning segment. Over 243–274 (SSKPAEVVLDEHGKNVTICVPDFGQDLYRDEN) the chain is Cytoplasmic. The helical transmembrane segment at 275-295 (LVTILGTSLLIGCILYSCLTS) threads the bilayer. The Extracellular portion of the chain corresponds to 296–348 (TTRSSSDALQGRYAAPELEIARCCFCFSPGGEDTEEQQQGKEGPRVIYDEKKG). A helical membrane pass occupies residues 349–369 (TVYIYSYFHFVFFLASLYVMM). Topologically, residues 370 to 391 (TVTNWFNYESANIESFFSGSWS) are cytoplasmic. Residues 392–412 (IFWVKMASCWICVLLYLCTLV) form a helical membrane-spanning segment. Over 413–424 (APLCCPTREFSV) the chain is Extracellular.

It belongs to the TDE1 family.

It is found in the cell membrane. The enzyme catalyses a 1,2-diacyl-sn-glycero-3-phospho-L-serine(in) = a 1,2-diacyl-sn-glycero-3-phospho-L-serine(out). It catalyses the reaction a 1,2-diacyl-sn-glycero-3-phosphocholine(in) = a 1,2-diacyl-sn-glycero-3-phosphocholine(out). It carries out the reaction a 1,2-diacyl-sn-glycero-3-phosphoethanolamine(in) = a 1,2-diacyl-sn-glycero-3-phosphoethanolamine(out). Functionally, restriction factor required to restrict infectivity of gammaretroviruses: acts by inhibiting an early step of viral infection. Impairs the penetration of the viral particle into the cytoplasm. Non-ATP-dependent, non-specific lipid transporter for phosphatidylserine, phosphatidylcholine, and phosphatidylethanolamine. Functions as a scramblase that flips lipids in both directions across the membrane. Phospholipid scrambling results in gammaretroviral surface exposure of phosphatidylserine and loss of membrane asymmetry, which leads to loss of infectivity. Enhances the incorporation of serine into phosphatidylserine and sphingolipids. May play a role in providing serine molecules for the formation of myelin glycosphingolipids in oligodendrocytes. The chain is Serine incorporator 5 (SERINC5) from Macaca fascicularis (Crab-eating macaque).